We begin with the raw amino-acid sequence, 742 residues long: MTTIKTSNLGFPRLGRKREWKKAIESYWAKKISKEELDQTLTDLHKENLLLQKYYHLDSIPVGDFSLYDHILDTSLLFNIIPERFQGRTIDDDLLFDIARGNKDHVASALIKWFNTNYHYIVPEWDNVEPKVSRNVLLDRFKYAQSLNVNAHPVIVGPITFVKLSKGGHQTFEEKVKTLLPLYKEVFESLIDAGAEYIQVDEPILVTDDSESYENITREAYDYFEKAGVAKKLVIQTYFERAHLKFLSSLPVGGLGLDFVHDNGYNLKQIEAGDFDKSKTLYAGIIDGRNVWASDIEAKKVLIDKLLAHTNELVIQPSSSLLHVPVSLDDETLDTSVGEGLSFATEKLDELDALRRLFNQNDSVKYDKLKARYERFQNQSFKNLDYDFESVRTSRQSPFAQRIEQQQKRLNLPDLPTTTIGSFPQSREVRKYRADWKNKRITDEAYETFLKNEIARWIKIQEDIGLDVLVHGEFERNDMVEFFGEKLQGFLVTKFGWVQSYGSRAVKPPIIYGDVKWTAPLTVDETVYAQSLTDKPVKGMLTGPVTILNWSFERVDLPRKVVQDQIALAINEEVLALEAAGIKVIQVDEPALREGLPLRSEYHEQYLKDAVLSFKLATSSVRDETQIHTHMCYSQFGQIIHAIHDLDADVISIETSRSHGDLIKDFEDINYDLGIGLGVYDIHSPRIPTKEEITTAINRSLQQIDRSLFWVNPDCGLKTRKEEEVKDALTVLVNAVKAKRQE.

5-methyltetrahydropteroyltri-L-glutamate is bound by residues 18 to 21 and lysine 112; that span reads REWK. L-homocysteine-binding positions include 420 to 422 and glutamate 473; that span reads IGS. L-methionine is bound by residues 420–422 and glutamate 473; that span reads IGS. 5-methyltetrahydropteroyltri-L-glutamate is bound at residue tryptophan 550. Aspartate 588 contributes to the L-homocysteine binding site. An L-methionine-binding site is contributed by aspartate 588. 5-methyltetrahydropteroyltri-L-glutamate is bound at residue glutamate 594. Zn(2+)-binding residues include histidine 630, cysteine 632, and glutamate 654. Histidine 683 acts as the Proton donor in catalysis. Residue cysteine 715 coordinates Zn(2+).

It belongs to the vitamin-B12 independent methionine synthase family. It depends on Zn(2+) as a cofactor.

It carries out the reaction 5-methyltetrahydropteroyltri-L-glutamate + L-homocysteine = tetrahydropteroyltri-L-glutamate + L-methionine. The protein operates within amino-acid biosynthesis; L-methionine biosynthesis via de novo pathway; L-methionine from L-homocysteine (MetE route): step 1/1. Its function is as follows. Catalyzes the transfer of a methyl group from 5-methyltetrahydrofolate to homocysteine resulting in methionine formation. The chain is 5-methyltetrahydropteroyltriglutamate--homocysteine methyltransferase from Staphylococcus aureus (strain MRSA252).